Reading from the N-terminus, the 131-residue chain is Small ribosomal subunit protein uS11 (131 aa).

This sequence belongs to the universal ribosomal protein uS11 family. Part of the 30S ribosomal subunit. Interacts with proteins S7 and S18. Binds to IF-3.

Located on the platform of the 30S subunit, it bridges several disparate RNA helices of the 16S rRNA. Forms part of the Shine-Dalgarno cleft in the 70S ribosome. The polypeptide is Small ribosomal subunit protein uS11 (Bacillus pumilus (strain SAFR-032)).